The following is a 404-amino-acid chain: G1/S-specific cyclin-E2 (404 aa).

A disordered region spans residues 1–41; that stretch reads MSRRSSRLQAKQHAQPNQPDSPQETQIIQAKKRKTAQDVKK. The span at 7–28 shows a compositional bias: polar residues; sequence RLQAKQHAQPNQPDSPQETQII. S21 is modified (phosphoserine). K348 is subject to N6-lactoyllysine. Position 383 is a phosphoserine (S383). At T392 the chain carries Phosphothreonine.

Belongs to the cyclin family. Cyclin E subfamily. In terms of assembly, interacts with the CDK2 (in vivo) and CDK3 (in vitro) protein kinases to form a serine/threonine kinase holoenzyme complex. The cyclin subunit imparts substrate specificity to the complex. Post-translationally, phosphorylation by CDK2 triggers its release from CDK2 and degradation via the ubiquitin proteasome pathway. Lactylated at Lys-348. Delactylated by SIRT3. In terms of tissue distribution, highest levels in adult testis, thymus and brain. Lower levels in placenta, spleen and colon.

The protein resides in the nucleus. Its function is as follows. Essential for the control of the cell cycle at the late G1 and early S phase. This Mus musculus (Mouse) protein is G1/S-specific cyclin-E2 (Ccne2).